Reading from the N-terminus, the 374-residue chain is Ferroptosis suppressor protein 1 (374 aa).

The N-myristoyl glycine moiety is linked to residue Gly-2. Residues 13–35 (VVIVGGGFAGIAAATQLKSFGIP) traverse the membrane as a helical segment. 6-hydroxy-FAD contacts are provided by residues 17–21 (GGGFA), Arg-53, and Val-81. The residue at position 167 (Lys-167) is an N6-acetyllysine. Asp-285 lines the 6-hydroxy-FAD pocket.

It belongs to the FAD-dependent oxidoreductase family. Requires 6-hydroxy-FAD as cofactor. Post-translationally, N-myristoylation at Gly-2 mediates the recruitment to lipid droplets and plasma membrane. Acetylation at Lys-167 prevents AIFM2 ubiquitination and degradation, thereby inhibiting ferroptosis. KAT2B mediates acetylation at Lys-167, while HDAC3 removes it. In terms of processing, ubiquitinated. AIFM2 undergoes 'Lys-29'-ubiquitination and proteasomal degradation, which is inhibited by acetylation at Lys-167.

It localises to the lipid droplet. It is found in the cell membrane. Its subcellular location is the cytoplasm. The protein localises to the mitochondrion membrane. The protein resides in the nucleus. It carries out the reaction ubiquinone-10 + NADH + H(+) = ubiquinol-10 + NAD(+). The enzyme catalyses phylloquinone + NADH + H(+) = phylloquinol + NAD(+). The catalysed reaction is menaquinone-4 + NADH + H(+) = menaquinol-4 + NAD(+). It catalyses the reaction menadione + NADH + H(+) = menadiol + NAD(+). With respect to regulation, the modification by 4-hydroxy-2-nonenal (HNE) adduction in mitochondria results in loss of the oxidoreductase activity and activation of a novel function in mitochondrial oxidative stress signaling. An NAD(P)H-dependent oxidoreductase that acts as a key inhibitor of ferroptosis. At the plasma membrane, catalyzes reduction of coenzyme Q/ubiquinone-10 to ubiquinol-10, a lipophilic radical-trapping antioxidant that prevents lipid oxidative damage and consequently ferroptosis. Acts in parallel to GPX4 to suppress phospholipid peroxidation and ferroptosis. This anti-ferroptotic function is independent of cellular glutathione levels. Also acts as a potent radical-trapping antioxidant by mediating warfarin-resistant vitamin K reduction in the canonical vitamin K cycle: catalyzes NAD(P)H-dependent reduction of vitamin K (phylloquinone, menaquinone-4 and menadione) to hydroquinone forms. Hydroquinones act as potent radical-trapping antioxidants inhibitor of phospholipid peroxidation and ferroptosis. May play a role in mitochondrial stress signaling. Upon oxidative stress, associates with the lipid peroxidation end product 4-hydroxy-2-nonenal (HNE) forming a lipid adduct devoid of oxidoreductase activity, which then translocates from mitochondria into the nucleus triggering DNA damage and cell death. This Xenopus tropicalis (Western clawed frog) protein is Ferroptosis suppressor protein 1 (aifm2).